The chain runs to 135 residues: Protein NrdI (135 aa).

The protein belongs to the NrdI family.

Probably involved in ribonucleotide reductase function. This Pectobacterium carotovorum subsp. carotovorum (strain PC1) protein is Protein NrdI.